The chain runs to 196 residues: MNVTVTVYDKNVKYRLEENIKNNKGPSNDDQPAYNNESKSTDGSDYAMFPTNIKYIFEDNNDELVDSSDAALTAGIDKVGDELENVIIVQLDESGSLEDITLISDQYELLSHRTNSLSLEENQMRTLSSHGDDKSNDEEEELSVDSDRFRVDSDIELDVISQFCDLSPFLRDLSLNDLIKLYVTQNEQLQMLSNSV.

Residues 20–45 are disordered; that stretch reads IKNNKGPSNDDQPAYNNESKSTDGSD. Positions 22–43 are enriched in polar residues; that stretch reads NNKGPSNDDQPAYNNESKSTDG. Serine 38 and serine 40 each carry phosphoserine. Threonine 41 carries the post-translational modification Phosphothreonine. Residues serine 44 and serine 116 each carry the phosphoserine modification. A compositionally biased stretch (polar residues) spans 120–129; it reads EENQMRTLSS. The disordered stretch occupies residues 120–145; that stretch reads EENQMRTLSSHGDDKSNDEEEELSVD. A phosphoserine mark is found at serine 135, serine 143, serine 146, serine 153, serine 174, and serine 195. The segment covering 135–144 has biased composition (acidic residues); that stretch reads SNDEEEELSV.

As to quaternary structure, forms a stable complex with ATG17 and ATG29. Interacts directly with ATG29. The ATG17-ATG29-ATG31 complex interacts with the ATG1-ATG13 complex. Note=The interaction with the ATG1-ATG13 complex is induced by starvation. Post-translationally, highly phosphorylated. Ser-174 is phosphorylated constitutively. Phosphorylation at Ser-174 is required for autophagy induced by various autophagy stimuli such as nitrogen starvation and rapamycin treatment.

The protein resides in the cytoplasm. Its subcellular location is the cytoskeleton. The protein localises to the preautophagosomal structure. Functionally, plays a role in starvation-induced autophagy. Involved in mitophagy. Functions with ATG17 and ATG29 at the preautophagosomal structure (PAS) in order to form normal autophagosomes under starvation conditions. May be involved in microtubule function, such as chromosome segregation and karyogamy. The sequence is that of Autophagy-related protein 31 (ATG31) from Saccharomyces cerevisiae (strain ATCC 204508 / S288c) (Baker's yeast).